We begin with the raw amino-acid sequence, 153 residues long: MGLTSQLLPPLFFLLACAGNFAHGHNCHIALREIIETLNSLTEQKTLCTKLTITDILAASKNTTEKETFCRAATVLRQFYSHHEKDTRCLGATAQQFHRHKQLIRFLKRLDRNLWGLAGLNSCPVKEASQSTLEDFLERLKTIMKEKYSKCRR.

The N-terminal stretch at 1–24 is a signal peptide; sequence MGLTSQLLPPLFFLLACAGNFAHG. Cystine bridges form between C27–C151, C48–C89, and C70–C123. Residue N62 is glycosylated (N-linked (GlcNAc...) asparagine).

It belongs to the IL-4/IL-13 family.

The protein resides in the secreted. Participates in at least several B-cell activation processes as well as of other cell types. It is a costimulator of DNA-synthesis. It induces the expression of class II MHC molecules on resting B-cells. It enhances both secretion and cell surface expression of IgE and IgG1. It also regulates the expression of the low affinity Fc receptor for IgE (CD23) on both lymphocytes and monocytes. Positively regulates IL31RA expression in macrophages. Stimulates autophagy in dendritic cells by interfering with mTORC1 signaling and through the induction of RUFY4. The polypeptide is Interleukin-4 (IL4) (Papio anubis (Olive baboon)).